The primary structure comprises 444 residues: Tol-Pal system protein TolB (444 aa).

The N-terminal stretch at 1-18 is a signal peptide; sequence MRNIIYFILLLFSCTGYA.

Belongs to the TolB family. The Tol-Pal system is composed of five core proteins: the inner membrane proteins TolA, TolQ and TolR, the periplasmic protein TolB and the outer membrane protein Pal. They form a network linking the inner and outer membranes and the peptidoglycan layer.

It is found in the periplasm. Part of the Tol-Pal system, which plays a role in outer membrane invagination during cell division and is important for maintaining outer membrane integrity. This is Tol-Pal system protein TolB from Rickettsia canadensis (strain McKiel).